A 336-amino-acid chain; its full sequence is Large ribosomal subunit protein uL3 (336 aa).

Disordered regions lie at residues 1 to 43 (MPQP…QGFA), 205 to 230 (ITKGKGTQGPVKRWGVQKRKGKHARQ), and 311 to 336 (RPAVRPGDQPRLDPEVRYVSTASNQG). The span at 219 to 230 (GVQKRKGKHARQ) shows a compositional bias: basic residues.

It belongs to the universal ribosomal protein uL3 family. As to quaternary structure, part of the 50S ribosomal subunit. Forms a cluster with proteins L14 and L24e.

One of the primary rRNA binding proteins, it binds directly near the 3'-end of the 23S rRNA, where it nucleates assembly of the 50S subunit. This is Large ribosomal subunit protein uL3 from Natronomonas pharaonis (strain ATCC 35678 / DSM 2160 / CIP 103997 / JCM 8858 / NBRC 14720 / NCIMB 2260 / Gabara) (Halobacterium pharaonis).